Consider the following 107-residue polypeptide: U1-lycotoxin-Ls1w (107 aa).

A signal peptide spans 1 to 20 (MLKVLVVVALLVTLISYSSS). Residues 21 to 41 (EGIDDLEADELLSLMANEQTR) constitute a propeptide that is removed on maturation. 4 disulfides stabilise this stretch: cysteine 44/cysteine 59, cysteine 51/cysteine 68, cysteine 58/cysteine 86, and cysteine 70/cysteine 84.

This sequence belongs to the neurotoxin 19 (CSTX) family. 04 (U1-Lctx) subfamily. Expressed by the venom gland.

It is found in the secreted. The polypeptide is U1-lycotoxin-Ls1w (Lycosa singoriensis (Wolf spider)).